A 405-amino-acid polypeptide reads, in one-letter code: Elongation factor Tu (405 aa).

The tr-type G domain occupies lysine 10–glutamate 215. Residues glycine 19–threonine 26 are G1. Residue glycine 19–threonine 26 participates in GTP binding. Position 26 (threonine 26) interacts with Mg(2+). The G2 stretch occupies residues glycine 61–asparagine 65. The interval aspartate 82–glycine 85 is G3. Residues aspartate 82 to histidine 86 and asparagine 137 to aspartate 140 contribute to the GTP site. Residues asparagine 137–aspartate 140 are G4. Residues serine 175–leucine 177 form a G5 region.

This sequence belongs to the TRAFAC class translation factor GTPase superfamily. Classic translation factor GTPase family. EF-Tu/EF-1A subfamily. As to quaternary structure, monomer.

It localises to the cytoplasm. It catalyses the reaction GTP + H2O = GDP + phosphate + H(+). GTP hydrolase that promotes the GTP-dependent binding of aminoacyl-tRNA to the A-site of ribosomes during protein biosynthesis. The polypeptide is Elongation factor Tu (Deinococcus radiodurans (strain ATCC 13939 / DSM 20539 / JCM 16871 / CCUG 27074 / LMG 4051 / NBRC 15346 / NCIMB 9279 / VKM B-1422 / R1)).